The following is a 238-amino-acid chain: ATP synthase subunit a, chloroplastic (238 aa).

5 helical membrane-spanning segments follow: residues 27-47 (GQVL…SFLG), 86-106 (VPFL…GALL), 125-145 (INTT…AGIS), 190-210 (LVVG…IMLL), and 211-231 (GVFT…AYIN).

The protein belongs to the ATPase A chain family. As to quaternary structure, F-type ATPases have 2 components, F(1) - the catalytic core - and F(0) - the membrane proton channel. F(1) has five subunits: alpha(3), beta(3), gamma(1), delta(1), epsilon(1). F(0) has four main subunits: a(1), b(1), b'(1) and c(10-14). The alpha and beta chains form an alternating ring which encloses part of the gamma chain. F(1) is attached to F(0) by a central stalk formed by the gamma and epsilon chains, while a peripheral stalk is formed by the delta, b and b' chains.

The protein resides in the plastid. It is found in the chloroplast thylakoid membrane. F(1)F(0) ATP synthase produces ATP from ADP in the presence of a proton or sodium gradient. F-type ATPases consist of two structural domains, F(1) containing the extramembraneous catalytic core and F(0) containing the membrane proton channel, linked together by a central stalk and a peripheral stalk. During catalysis, ATP synthesis in the catalytic domain of F(1) is coupled via a rotary mechanism of the central stalk subunits to proton translocation. The protein is ATP synthase subunit a, chloroplastic of Chlamydomonas reinhardtii (Chlamydomonas smithii).